The chain runs to 775 residues: Metal transporter CNNM4 (775 aa).

Residues 1–178 (MAPVGGGGRP…LLFMVEEPGR (178 aa)) are Extracellular-facing. Asparagine 85 and asparagine 122 each carry an N-linked (GlcNAc...) asparagine glycan. One can recognise a CNNM transmembrane domain in the interval 178 to 358 (RFLPLWLHIL…EPYNDLVKEE (181 aa)). Residues 179-199 (FLPLWLHILLITVLLVLSGIF) traverse the membrane as a helical segment. The Cytoplasmic portion of the chain corresponds to 200–240 (SGLNLGLMALDPMELRIVQNCGTEKERRYARKIEPIRRKGN). Positions 241–261 (YLLCSLLLGNVLVNTSLTILL) form an intramembrane region, helical. The Cytoplasmic portion of the chain corresponds to 262–264 (DNL). The helical transmembrane segment at 265–285 (IGSGLMAVASSTIGIVIFGEI) threads the bilayer. At 286–293 (LPQALCSR) the chain is on the extracellular side. The helical transmembrane segment at 294–316 (HGLAVGANTILLTKFFMLLTFPL) threads the bilayer. Residues 317-775 (SFPISKLLDF…LHKASHENAI (459 aa)) are Cytoplasmic-facing. CBS domains are found at residues 377–438 (MTQL…CTPL) and 445–511 (YNHP…ILDE). Phosphoserine is present on residues serine 660, serine 664, and serine 770.

The protein belongs to the ACDP family. In terms of assembly, interacts with COX11. As to expression, widely expressed. Highly expressed in heart.

The protein resides in the cell membrane. Its function is as follows. Probable metal transporter. The interaction with the metal ion chaperone COX11 suggests that it may play a role in sensory neuron functions. May play a role in biomineralization and retinal function. The chain is Metal transporter CNNM4 (CNNM4) from Homo sapiens (Human).